Here is a 1307-residue protein sequence, read N- to C-terminus: TBC1 domain family member 4 (1307 aa).

Position 1 is an N-acetylmethionine (M1). Residues 1–30 (MESPSCIQDEPFPHPLEPEPSAPAQPGATK) are disordered. Residues 13–23 (PHPLEPEPSAP) are compositionally biased toward pro residues. Positions 53–209 (PMLPWLMAEI…QKFEVLYCGR (157 aa)) constitute a PID 1 domain. Over residues 237–246 (LKLQGERGGD) the composition is skewed to basic and acidic residues. Residues 237–276 (LKLQGERGGDPGDEMGVLEVESPVSPDDSLPEKADGTVNS) are disordered. Phosphoserine occurs at positions 258, 261, and 320. In terms of domain architecture, PID 2 spans 319–475 (RSRCSSVTGV…HSLHKLCERI (157 aa)). S324 and S348 each carry phosphoserine; by PKB/AKT1. The tract at residues 330–360 (QKKVHENNQKTQPRRRHASAPSHVQPSDSEK) is disordered. Phosphoserine is present on S351. K484 carries the N6-acetyllysine modification. S573 is modified (phosphoserine). At T575 the chain carries Phosphothreonine. A Phosphoserine; by PKB/AKT1 modification is found at S577. An Omega-N-methylarginine modification is found at R584. Phosphoserine; by PKB/AKT1 is present on S595. Phosphoserine is present on residues S598 and S616. 2 disordered regions span residues 603–684 (NSLA…SEQC) and 732–774 (SPQY…PVTP). Residues 615–624 (DSPPGTPPAS) show a composition bias toward pro residues. The residue at position 620 (T620) is a Phosphothreonine. S624 is subject to Phosphoserine. At T649 the chain carries Phosphothreonine; by PKB/AKT1. S673 is modified (phosphoserine). Polar residues predominate over residues 757–767 (SSTCSNESLNA). S758 bears the Phosphoserine; by PKB/AKT1 mark. Phosphoserine occurs at positions 761 and 764. T770 carries the post-translational modification Phosphothreonine. Residues 927–1121 (GVPKSRRGEI…RVFDIIFLQG (195 aa)) form the Rab-GAP TBC domain.

In terms of processing, phosphorylated by AKT1; insulin-induced. Also phosphorylated by AMPK in response to insulin. Insulin-stimulated phosphorylation is required for SLC2A4/GLUT4 translocation. Has no effect on SLC2A4/GLUT4 internalization. In terms of tissue distribution, widely expressed, including in pancreatic beta cells.

It is found in the cytoplasm. May act as a GTPase-activating protein for RAB2A, RAB8A, RAB10 and RAB14. Promotes insulin-induced glucose transporter SLC2A4/GLUT4 translocation at the plasma membrane, thus increasing glucose uptake. This is TBC1 domain family member 4 (Tbc1d4) from Mus musculus (Mouse).